The chain runs to 164 residues: Dehydrin Rab16B (164 aa).

The interval methionine 1–histidine 164 is disordered. Gly residues predominate over residues glycine 25–glycine 53. Low complexity predominate over residues glycine 107 to glycine 117. Over residues glycine 147–histidine 164 the composition is skewed to basic and acidic residues.

The protein belongs to the plant dehydrin family.

This Oryza sativa subsp. indica (Rice) protein is Dehydrin Rab16B (RAB16B).